The sequence spans 549 residues: Chaperonin GroEL 1 (549 aa).

Residues 30–33, Lys-51, 87–91, Gly-415, 479–481, and Asp-495 contribute to the ATP site; these read TLGP, DGTTT, and NAA.

The protein belongs to the chaperonin (HSP60) family. In terms of assembly, forms a cylinder of 14 subunits composed of two heptameric rings stacked back-to-back. Interacts with the co-chaperonin GroES.

Its subcellular location is the cytoplasm. The enzyme catalyses ATP + H2O + a folded polypeptide = ADP + phosphate + an unfolded polypeptide.. Together with its co-chaperonin GroES, plays an essential role in assisting protein folding. The GroEL-GroES system forms a nano-cage that allows encapsulation of the non-native substrate proteins and provides a physical environment optimized to promote and accelerate protein folding. This is Chaperonin GroEL 1 from Azoarcus sp. (strain BH72).